Consider the following 253-residue polypeptide: Ribosomal RNA small subunit methyltransferase J (253 aa).

Residues 123–124 (ER) and D176 each bind S-adenosyl-L-methionine.

This sequence belongs to the methyltransferase superfamily. RsmJ family.

It is found in the cytoplasm. It catalyses the reaction guanosine(1516) in 16S rRNA + S-adenosyl-L-methionine = N(2)-methylguanosine(1516) in 16S rRNA + S-adenosyl-L-homocysteine + H(+). Functionally, specifically methylates the guanosine in position 1516 of 16S rRNA. In Magnetococcus marinus (strain ATCC BAA-1437 / JCM 17883 / MC-1), this protein is Ribosomal RNA small subunit methyltransferase J.